Reading from the N-terminus, the 205-residue chain is Probable GTP-binding protein EngB (205 aa).

In terms of domain architecture, EngB-type G spans 27 to 201 (SGIEIAFAGR…AAKLDSWFAP (175 aa)). GTP-binding positions include 35 to 42 (GRSNAGKS), 62 to 66 (GRTQL), 80 to 83 (DLPG), 147 to 150 (TKAD), and 180 to 182 (FSA). The Mg(2+) site is built by Ser42 and Thr64.

Belongs to the TRAFAC class TrmE-Era-EngA-EngB-Septin-like GTPase superfamily. EngB GTPase family. Requires Mg(2+) as cofactor.

In terms of biological role, necessary for normal cell division and for the maintenance of normal septation. This chain is Probable GTP-binding protein EngB, found in Pasteurella multocida (strain Pm70).